Consider the following 536-residue polypeptide: Phosphoenolpyruvate carboxykinase (ATP) (536 aa).

Arginine 62, tyrosine 203, and lysine 209 together coordinate substrate. ATP contacts are provided by residues lysine 209, histidine 228, and 244–252; that span reads GLSGTGKTT. Mn(2+) contacts are provided by lysine 209 and histidine 228. Residue aspartate 265 participates in Mn(2+) binding. Residues glutamate 293, arginine 329, 445–446, and threonine 451 contribute to the ATP site; that span reads RI. Arginine 329 provides a ligand contact to substrate.

The protein belongs to the phosphoenolpyruvate carboxykinase (ATP) family. As to quaternary structure, monomer. Mn(2+) is required as a cofactor.

It localises to the cytoplasm. The catalysed reaction is oxaloacetate + ATP = phosphoenolpyruvate + ADP + CO2. Its pathway is carbohydrate biosynthesis; gluconeogenesis. Functionally, involved in the gluconeogenesis. Catalyzes the conversion of oxaloacetate (OAA) to phosphoenolpyruvate (PEP) through direct phosphoryl transfer between the nucleoside triphosphate and OAA. The protein is Phosphoenolpyruvate carboxykinase (ATP) of Actinobacillus pleuropneumoniae serotype 5b (strain L20).